The following is a 159-amino-acid chain: Ribosome maturation factor RimP (159 aa).

It belongs to the RimP family.

It is found in the cytoplasm. Its function is as follows. Required for maturation of 30S ribosomal subunits. This is Ribosome maturation factor RimP from Streptococcus pneumoniae serotype 19F (strain G54).